A 300-amino-acid polypeptide reads, in one-letter code: N-acetylmuramic acid 6-phosphate etherase 1 (300 aa).

The SIS domain maps to 57–220 (IATAFAQGGR…TTGAMIKSGK (164 aa)). Residue E85 is the Proton donor of the active site. E116 is an active-site residue.

Belongs to the GCKR-like family. MurNAc-6-P etherase subfamily. As to quaternary structure, homodimer.

It carries out the reaction N-acetyl-D-muramate 6-phosphate + H2O = N-acetyl-D-glucosamine 6-phosphate + (R)-lactate. The protein operates within amino-sugar metabolism; 1,6-anhydro-N-acetylmuramate degradation. It functions in the pathway amino-sugar metabolism; N-acetylmuramate degradation. Its pathway is cell wall biogenesis; peptidoglycan recycling. In terms of biological role, specifically catalyzes the cleavage of the D-lactyl ether substituent of MurNAc 6-phosphate, producing GlcNAc 6-phosphate and D-lactate. Together with AnmK, is also required for the utilization of anhydro-N-acetylmuramic acid (anhMurNAc) either imported from the medium or derived from its own cell wall murein, and thus plays a role in cell wall recycling. This chain is N-acetylmuramic acid 6-phosphate etherase 1, found in Vibrio cholerae serotype O1 (strain ATCC 39315 / El Tor Inaba N16961).